Here is a 1582-residue protein sequence, read N- to C-terminus: ATP-binding cassette sub-family C member 8 (1582 aa).

Topologically, residues 1 to 30 are extracellular; the sequence is MPLAFCGTENHSAAYRVDQGVLNNGCFVDA. A disulfide bond links Cys6 and Cys26. N-linked (GlcNAc...) asparagine glycosylation occurs at Asn10. Residues 31-47 traverse the membrane as a helical segment; the sequence is LNVVPHVFLLFITFPIL. Topologically, residues 48–72 are cytoplasmic; the sequence is FIGWGSQSSKVHIHHSTWLHFPGHN. Residues 73 to 89 form a helical membrane-spanning segment; the sequence is LRWILTFILLFVLVCEI. At 90–106 the chain is on the extracellular side; sequence AEGILSDGVTESRHLHL. Residues 107-123 form a helical membrane-spanning segment; the sequence is YMPAGMAFMAAITSVVY. At 124–136 the chain is on the cytoplasmic side; it reads YHNIETSNFPKLL. Residues 137–153 traverse the membrane as a helical segment; the sequence is IALLIYWTLAFITKTIK. Over 154 to 169 the chain is Extracellular; the sequence is FVKFYDHAIGFSQLRF. A helical transmembrane segment spans residues 170 to 186; the sequence is CLTGLLVILYGMLLLVE. Topologically, residues 187–303 are cytoplasmic; the sequence is VNVIRVRRYV…AFGRRLVLSS (117 aa). Residues 299–602 form the ABC transmembrane type-1 1 domain; the sequence is LVLSSTFRIL…LSSVVRSTVK (304 aa). A helical transmembrane segment spans residues 304-319; it reads TFRILADLLGFAGPLC. At 320-356 the chain is on the extracellular side; sequence IFGIVDHLGKENHVFQPKTQFLGVYFVSSQEFLGNAY. Residues 357 to 372 traverse the membrane as a helical segment; it reads VLAVLLFLALLLQRTF. At 373–438 the chain is on the cytoplasmic side; sequence LQASYYVAIE…MWFFFLCPNL (66 aa). Residues 439-454 form a helical membrane-spanning segment; sequence WAMPVQIIVGVILLYY. Residues 455–460 lie on the Extracellular side of the membrane; sequence ILGVSA. The helical transmembrane segment at 461-473 threads the bilayer; it reads LIGAAVIILLAPV. The Cytoplasmic portion of the chain corresponds to 474 to 541; that stretch reads QYFVATKLSQ…SLRAFAVYTS (68 aa). A helical membrane pass occupies residues 542 to 557; that stretch reads ISIFMNTAIPIAAVLI. The Extracellular portion of the chain corresponds to 558–576; it reads TFVGHVSFFKESDFSPSVA. Residues 577-592 form a helical membrane-spanning segment; the sequence is FASLSLFHILVTPLFL. Residues 593 to 1013 are Cytoplasmic-facing; sequence LSSVVRSTVK…YLSSAGILLL (421 aa). In terms of domain architecture, ABC transporter 1 spans 679-930; the sequence is VQIIGGFFTW…ECQLFEHWKT (252 aa). Trp688, Gly716, Ser720, and Ser721 together coordinate ATP. Ser720 is a Mg(2+) binding site. The segment at 741-768 is disordered; it reads SSLPDSEGEDPSNPERETAADSDARSRG. The segment covering 753-766 has biased composition (basic and acidic residues); sequence NPERETAADSDARS. Gln775 lines the Mg(2+) pocket. Positions 939 to 950 are enriched in basic and acidic residues; the sequence is LEKETVMERKAP. Residues 939 to 962 form a disordered region; it reads LEKETVMERKAPEPSQGLPRAMSS. The 295-residue stretch at 1013–1307 folds into the ABC transmembrane type-1 2 domain; the sequence is LSLLVFSQLL…MVRNLADMEI (295 aa). Residues 1014–1031 traverse the membrane as a helical segment; it reads SLLVFSQLLKHMVLVAID. Topologically, residues 1032–1067 are extracellular; it reads YWLAKWTDSALVLSPAARNCSLSQECALDQSVYAMV. An N-linked (GlcNAc...) asparagine glycan is attached at Asn1050. Residues 1068–1084 traverse the membrane as a helical segment; it reads FTVLCSLGIALCLVTSV. Residues 1085-1143 lie on the Cytoplasmic side of the membrane; sequence TVEWTGLKVAKRLHRSLLNRIILAPMRFFETTPLGSILNRFSSDCNTIDQHIPSTLECL. Residues 1144-1161 form a helical membrane-spanning segment; it reads SRSTLLCVSALAVISYVT. Residue Pro1162 is a topological domain, extracellular. Residues 1163 to 1175 form a helical membrane-spanning segment; sequence VFLVALLPLAVVC. At 1176-1249 the chain is on the cytoplasmic side; that stretch reads YFIQKYFRVA…FLTAANRWLE (74 aa). A helical membrane pass occupies residues 1250-1265; the sequence is VRMEYIGACVVLIAAA. Residues 1266-1281 lie on the Extracellular side of the membrane; the sequence is TSISNSLHRELSAGLV. Residues 1282–1297 traverse the membrane as a helical segment; that stretch reads GLGLTYALMVSNYLNW. Residues 1298-1582 lie on the Cytoplasmic side of the membrane; it reads MVRNLADMEI…VFASFVRADK (285 aa). The ABC transporter 2 domain occupies 1345–1579; sequence IQIQNLSVRY…KDSVFASFVR (235 aa). ADP-binding residues include Thr1381, Gly1382, Gly1384, Lys1385, Ser1386, and Ser1387. Ser1483 is a binding site for ATP.

Belongs to the ABC transporter superfamily. ABCC family. Conjugate transporter (TC 3.A.1.208) subfamily. As to quaternary structure, forms an heterooctamer with KCNJ11; four ABCC8/SUR1 molecules interact with one KCNJ11 homotetramer.

It is found in the cell membrane. KATP channels are regulated by cytoplasmic ATP/ADP ratios; ATP inhibits the channel by closing the pore, while ADP activates the channel. Activated by phosphatidylinositol 4,5-biphosphate (PtdIns(4,5)P2). Regulator subunit of pancreatic ATP-sensitive potassium channel (KATP), playing a major role in the regulation of insulin release. In pancreatic cells, it forms KATP channels with KCNJ11; KCNJ11 forms the channel pore while ABCC8 is required for activation and regulation. The polypeptide is ATP-binding cassette sub-family C member 8 (Abcc8) (Rattus norvegicus (Rat)).